The sequence spans 272 residues: MPEFLTVVSWPFLILLSFQVRVVAGAPQPWHCAPCTAERLELCPPVPASCPEISRPAGCGCCPTCALPLGAACGVATARCAQGLSCRALPGEPRPLHALTRGQGACVLEPAAPATSSLSGSQHEEAKAAVASEDELAESPEMTEEQLLDSFHLMAPSREDQPILWNAISTYSSMRAREITDLKKWKEPCQRELYKVLERLAAAQQKAGDEIYKFYLPNCNKNGFYHSKQCETSLDGEAGLCWCVYPWSGKKIPGSLETRGDPNCHQYFNVQN.

A signal peptide spans 1 to 25 (MPEFLTVVSWPFLILLSFQVRVVAG). In terms of domain architecture, IGFBP N-terminal spans 28-109 (QPWHCAPCTA…TRGQGACVLE (82 aa)). Disulfide bonds link Cys32–Cys59, Cys35–Cys61, Cys43–Cys62, Cys50–Cys65, Cys73–Cys86, and Cys80–Cys106. Residues 115–143 (TSSLSGSQHEEAKAAVASEDELAESPEMT) are disordered. The span at 132–143 (SEDELAESPEMT) shows a compositional bias: acidic residues. Phosphoserine occurs at positions 139, 157, and 169. Thr170 bears the Phosphothreonine mark. At Tyr171 the chain carries Phosphotyrosine. The Thyroglobulin type-1 domain occupies 186-264 (KEPCQRELYK…SLETRGDPNC (79 aa)). 3 disulfides stabilise this stretch: Cys189-Cys219, Cys230-Cys241, and Cys243-Cys264. The residue at position 255 (Ser255) is a Phosphoserine. A Cell attachment site motif is present at residues 259 to 261 (RGD).

Binds equally well IGF1 and IGF2. Interacts with integrin ITGA5:ITGB1. Interacts with VHL; this interaction inhibits HIF1A degradation.

Its subcellular location is the secreted. In terms of biological role, multifunctional protein that plays a critical role in regulating the availability of IGFs such as IGF1 and IGF2 to their receptors and thereby regulates IGF-mediated cellular processes including cell migration, proliferation, differentiation or apoptosis in a cell-type specific manner. Also plays a positive role in cell migration by interacting with integrin ITGA5:ITGB1 through its RGD motif. Mechanistically, binding to integrins leads to activation of focal adhesion kinase/PTK2 and stimulation of the mitogen-activated protein kinase (MAPK) pathway. Regulates cardiomyocyte apoptosis by suppressing HIF-1alpha/HIF1A ubiquitination and subsequent degradation. This Rattus norvegicus (Rat) protein is Insulin-like growth factor-binding protein 1 (Igfbp1).